The chain runs to 191 residues: Phosphoheptose isomerase (191 aa).

Positions 37–191 constitute an SIS domain; it reads IAESFKQDGK…IIQLIEKEME (155 aa). Position 52–54 (52–54) interacts with substrate; that stretch reads NGG. H61 and E65 together coordinate Zn(2+). Substrate contacts are provided by residues E65, 93-94, 119-121, S124, and Q172; these read ND and STS. Zn(2+) is bound by residues Q172 and H180.

It belongs to the SIS family. GmhA subfamily. As to quaternary structure, homotetramer. The cofactor is Zn(2+).

It is found in the cytoplasm. The enzyme catalyses 2 D-sedoheptulose 7-phosphate = D-glycero-alpha-D-manno-heptose 7-phosphate + D-glycero-beta-D-manno-heptose 7-phosphate. It functions in the pathway carbohydrate biosynthesis; D-glycero-D-manno-heptose 7-phosphate biosynthesis; D-glycero-alpha-D-manno-heptose 7-phosphate and D-glycero-beta-D-manno-heptose 7-phosphate from sedoheptulose 7-phosphate: step 1/1. The protein operates within bacterial outer membrane biogenesis; LPS core biosynthesis. Functionally, catalyzes the isomerization of sedoheptulose 7-phosphate in D-glycero-D-manno-heptose 7-phosphate. This chain is Phosphoheptose isomerase, found in Vibrio vulnificus (strain CMCP6).